We begin with the raw amino-acid sequence, 66 residues long: MEVNNKKLINSFVGRAENFRRYDTYLPENDPLAMNSVFTFSSYTGIGPLYRDMRNSNFLSNPNEMG.

This is an uncharacterized protein from Homo sapiens (Human).